The following is a 105-amino-acid chain: Platelet factor 4 (105 aa).

The first 29 residues, 1 to 29 (MSVAAVFRGLRPSPELLLLGLLFLPAVVA), serve as a signal peptide directing secretion. Threonine 31 is a glycosylation site (O-linked (GalNAc...) threonine). 2 disulfide bridges follow: cysteine 44/cysteine 71 and cysteine 46/cysteine 87. Serine 61 bears the Phosphoserine mark. Position 96–102 (96–102 (KKVIKKI)) interacts with heparin.

It belongs to the intercrine alpha (chemokine CxC) family. Homotetramer. Interacts with TNFAIP6 (via Link domain). Interacts with CCR1. Interacts with CXCR3. Interacts with THBD; this interaction enhances generation of activated protein C.

The protein resides in the secreted. In terms of biological role, chemokine released during platelet aggregation that plays a role in different biological processes including hematopoiesis, cell proliferation, differentiation, and activation. Acts via different functional receptors including CCR1, CXCR3A or CXCR3B. Upon interaction with CXCR3A receptor, induces activated T-lymphocytes migration mediated via downstream Ras/extracellular signal-regulated kinase (ERK) signaling. Neutralizes the anticoagulant effect of heparin by binding more strongly to heparin than to the chondroitin-4-sulfate chains of the carrier molecule. Plays a role in the inhibition of hematopoiesis and in the maintenance of hematopoietic stem cell (HSC) quiescence. Chemotactic for neutrophils and monocytes via CCR1. Inhibits endothelial cell proliferation. In cooperation with toll-like receptor 8/TLR8, induces chromatin remodeling and activates inflammatory gene expression via the TBK1-IRF5 axis. In addition, induces myofibroblast differentiation and collagen synthesis in different precursor cells, including endothelial cells, by stimulating endothelial-to-mesenchymal transition. Interacts with thrombomodulin/THBD to enhance the activation of protein C and thus potentiates its anticoagulant activity. The polypeptide is Platelet factor 4 (Pf4) (Mus musculus (Mouse)).